The chain runs to 225 residues: MAITDSDLDLAQYIDHSLLIPTATSEQLEAYCQQAEQYRFPTVCVYPAAVKQAVQLLHGKKTLVSTVIGFPAGATTSAVKRYEALEAVDNGAKELDVVINLGWLKDGKSEQLFQEIASICQETGQTVKAILETSQLTDTEKRLAAEICMDAGVSYLKTSTGWFGGATVSDVKFLKEISKGRVGIKASGGIRTLEQAIALIRAGATRLGTSRGVDLVRQQKAAFEE.

The active-site Proton donor/acceptor is the Asp96. Lys157 (schiff-base intermediate with acetaldehyde) is an active-site residue. Lys185 serves as the catalytic Proton donor/acceptor.

This sequence belongs to the DeoC/FbaB aldolase family. DeoC type 1 subfamily.

It localises to the cytoplasm. It catalyses the reaction 2-deoxy-D-ribose 5-phosphate = D-glyceraldehyde 3-phosphate + acetaldehyde. Its pathway is carbohydrate degradation; 2-deoxy-D-ribose 1-phosphate degradation; D-glyceraldehyde 3-phosphate and acetaldehyde from 2-deoxy-alpha-D-ribose 1-phosphate: step 2/2. Catalyzes a reversible aldol reaction between acetaldehyde and D-glyceraldehyde 3-phosphate to generate 2-deoxy-D-ribose 5-phosphate. This is Deoxyribose-phosphate aldolase from Microcystis aeruginosa (strain NIES-843 / IAM M-2473).